Reading from the N-terminus, the 251-residue chain is tRNA (guanine-N(1)-)-methyltransferase (251 aa).

S-adenosyl-L-methionine-binding positions include Gly113 and 133–138; that span reads IGDYVL.

It belongs to the RNA methyltransferase TrmD family. As to quaternary structure, homodimer.

It localises to the cytoplasm. It catalyses the reaction guanosine(37) in tRNA + S-adenosyl-L-methionine = N(1)-methylguanosine(37) in tRNA + S-adenosyl-L-homocysteine + H(+). Functionally, specifically methylates guanosine-37 in various tRNAs. The chain is tRNA (guanine-N(1)-)-methyltransferase from Pectobacterium carotovorum subsp. carotovorum (strain PC1).